Here is a 71-residue protein sequence, read N- to C-terminus: Lysis protein (71 aa).

Residues M1 to P24 are disordered. A helical membrane pass occupies residues L34–L56.

Belongs to the Leviviricetes lysis protein family.

The protein localises to the host cell inner membrane. Its subcellular location is the host cell outer membrane. Functionally, induces the formation of specific membrane adhesion sites between the inner and outer membranes, apparently leading to host cell lysis. Lysis may be performed via activation of host murein hydrolases. This is Lysis protein from Enterobacteria phage fr (Bacteriophage fr).